The primary structure comprises 438 residues: Aspartate--tRNA(Asp/Asn) ligase (438 aa).

E176 serves as a coordination point for L-aspartate. The aspartate stretch occupies residues Q198 to K201. R220 lines the L-aspartate pocket. Residues R220–E222, R228–L230, and E361 contribute to the ATP site. Mg(2+)-binding residues include E361 and S364. The L-aspartate site is built by S364 and R368. Residue G409–R412 participates in ATP binding.

This sequence belongs to the class-II aminoacyl-tRNA synthetase family. Type 2 subfamily. In terms of assembly, homodimer. It depends on Mg(2+) as a cofactor.

The protein localises to the cytoplasm. It catalyses the reaction tRNA(Asx) + L-aspartate + ATP = L-aspartyl-tRNA(Asx) + AMP + diphosphate. Functionally, aspartyl-tRNA synthetase with relaxed tRNA specificity since it is able to aspartylate not only its cognate tRNA(Asp) but also tRNA(Asn). Reaction proceeds in two steps: L-aspartate is first activated by ATP to form Asp-AMP and then transferred to the acceptor end of tRNA(Asp/Asn). The chain is Aspartate--tRNA(Asp/Asn) ligase from Methanococcus maripaludis (strain C6 / ATCC BAA-1332).